The following is a 313-amino-acid chain: Porphobilinogen deaminase (313 aa).

The residue at position 242 (C242) is an S-(dipyrrolylmethanemethyl)cysteine.

Belongs to the HMBS family. In terms of assembly, monomer. Dipyrromethane is required as a cofactor.

The enzyme catalyses 4 porphobilinogen + H2O = hydroxymethylbilane + 4 NH4(+). It participates in porphyrin-containing compound metabolism; protoporphyrin-IX biosynthesis; coproporphyrinogen-III from 5-aminolevulinate: step 2/4. Functionally, tetrapolymerization of the monopyrrole PBG into the hydroxymethylbilane pre-uroporphyrinogen in several discrete steps. In Pseudomonas putida (strain ATCC 47054 / DSM 6125 / CFBP 8728 / NCIMB 11950 / KT2440), this protein is Porphobilinogen deaminase.